Consider the following 760-residue polypeptide: General transcription and DNA repair factor IIH helicase subunit XPD (760 aa).

Residues Gly-7–Asp-283 enclose the Helicase ATP-binding domain. Residue Met-42 to Thr-49 participates in ATP binding. Positions 116, 134, 155, and 190 each coordinate [4Fe-4S] cluster. The DEAH box motif lies at Asp-234–His-237. The segment at Met-438–Leu-637 is mediates interaction with MMS19.

The protein belongs to the helicase family. RAD3/XPD subfamily. As to quaternary structure, component of the 7-subunit TFIIH core complex composed of XPB/ERCC3, XPD/ERCC2, GTF2H1, GTF2H2, GTF2H3, GTF2H4 and GTF2H5, which is active in NER. The core complex associates with the 3-subunit CDK-activating kinase (CAK) module composed of CCNH/cyclin H, CDK7 and MNAT1 to form the 10-subunit holoenzyme (holo-TFIIH) active in transcription. The interaction with GTF2H2 results in the stimulation of the 5'--&gt;3' helicase activity. Component of the MMXD complex, which includes CIAO1, ERCC2, CIAO2B, MMS19 and SLC25A5. Interacts with CIAO1 and CIAO2B; the interaction WITH CIAO2B is direct. Interacts with ATF7IP. Interacts directly with MMS19. Part of TBP-based Pol II pre-initiation complex (PIC), in which Pol II core assembles with general transcription factors and other specific initiation factors including GTF2E1, GTF2E2, GTF2F1, GTF2F2, TCEA1, ERCC2, ERCC3, GTF2H2, GTF2H3, GTF2H4, GTF2H5, GTF2A1, GTF2A2, GTF2B and TBP; this large multi-subunit PIC complex mediates DNA unwinding and targets Pol II core to the transcription start site where the first phosphodiester bond forms. Requires Mg(2+) as cofactor. The cofactor is [4Fe-4S] cluster. Post-translationally, ISGylated.

The protein localises to the nucleus. The protein resides in the cytoplasm. It is found in the cytoskeleton. Its subcellular location is the spindle. It carries out the reaction Couples ATP hydrolysis with the unwinding of duplex DNA at the replication fork by translocating in the 5'-3' direction. This creates two antiparallel DNA single strands (ssDNA). The leading ssDNA polymer is the template for DNA polymerase III holoenzyme which synthesizes a continuous strand.. The enzyme catalyses ATP + H2O = ADP + phosphate + H(+). Its function is as follows. ATP-dependent 5'-3' DNA helicase, component of the general transcription and DNA repair factor IIH (TFIIH) core complex, which is involved in general and transcription-coupled nucleotide excision repair (NER) of damaged DNA and, when complexed to CDK-activating kinase (CAK), involved in transcription by RNA polymerase II. In NER, TFIIH acts by opening DNA around the lesion to allow the excision of the damaged oligonucleotide and its replacement by a new DNA fragment. The ATP-dependent helicase activity of XPD/ERCC2 is required for DNA opening. In transcription, TFIIH has an essential role in transcription initiation. When the pre-initiation complex (PIC) has been established, TFIIH is required for promoter opening and promoter escape. Phosphorylation of the C-terminal tail (CTD) of the largest subunit of RNA polymerase II by the kinase module CAK controls the initiation of transcription. XPD/ERCC2 acts by forming a bridge between CAK and the core-TFIIH complex. Involved in the regulation of vitamin-D receptor activity. As part of the mitotic spindle-associated MMXD complex it plays a role in chromosome segregation. Might have a role in aging process and could play a causative role in the generation of skin cancers. The sequence is that of General transcription and DNA repair factor IIH helicase subunit XPD (Ercc2) from Mus musculus (Mouse).